The chain runs to 666 residues: tRNA 5-methylaminomethyl-2-thiouridine biosynthesis bifunctional protein MnmC (666 aa).

The tract at residues 1-245 (MKQYAIQPAT…KREMLCGVME (245 aa)) is tRNA (mnm(5)s(2)U34)-methyltransferase. Positions 270 to 666 (IGGGIASALL…RKLLKGKAVK (397 aa)) are FAD-dependent cmnm(5)s(2)U34 oxidoreductase.

It in the N-terminal section; belongs to the methyltransferase superfamily. tRNA (mnm(5)s(2)U34)-methyltransferase family. In the C-terminal section; belongs to the DAO family. Requires FAD as cofactor.

The protein localises to the cytoplasm. The catalysed reaction is 5-aminomethyl-2-thiouridine(34) in tRNA + S-adenosyl-L-methionine = 5-methylaminomethyl-2-thiouridine(34) in tRNA + S-adenosyl-L-homocysteine + H(+). Its function is as follows. Catalyzes the last two steps in the biosynthesis of 5-methylaminomethyl-2-thiouridine (mnm(5)s(2)U) at the wobble position (U34) in tRNA. Catalyzes the FAD-dependent demodification of cmnm(5)s(2)U34 to nm(5)s(2)U34, followed by the transfer of a methyl group from S-adenosyl-L-methionine to nm(5)s(2)U34, to form mnm(5)s(2)U34. The chain is tRNA 5-methylaminomethyl-2-thiouridine biosynthesis bifunctional protein MnmC from Salmonella arizonae (strain ATCC BAA-731 / CDC346-86 / RSK2980).